Here is a 580-residue protein sequence, read N- to C-terminus: Lysine--tRNA ligase (580 aa).

The 'HIGH' region motif lies at 43-51 (PSGPIHLGN). The interval 178-209 (KAPAKKSQKPLDEAELEAAEGSGAAAEDDGSS) is disordered. The segment covering 196-209 (AEGSGAAAEDDGSS) has biased composition (low complexity). The short motif at 325 to 329 (KMSSS) is the 'KMSKS' region element.

This sequence belongs to the class-I aminoacyl-tRNA synthetase family.

It is found in the cytoplasm. It carries out the reaction tRNA(Lys) + L-lysine + ATP = L-lysyl-tRNA(Lys) + AMP + diphosphate. The sequence is that of Lysine--tRNA ligase (lysS) from Streptomyces coelicolor (strain ATCC BAA-471 / A3(2) / M145).